The chain runs to 294 residues: MNFQSVIATLHQFWAERGCLIAQPYDIEKGAGTKNPHTFLRALGPEPWAVAYIEPCRRPTDGRYGENPNRFQHYYQYQVLIKPSPDNIQDIYLDSLRALGIRPEDHDIRFVEDNWEDATVGAWGTGWEVWLDGMEITQFTYFQQCGGIDCRPVSIEITYGLERLAMYLQEVEAITKIHWTDDITYGDVFLQNEIEQSTYNFEASNPELLLTLFNLYEQEASQLTERGLVLPSLDYVMKCSHTFNLLDARGVISVTERTRYIARIRHLARKVANLYVEQREKLGFPLLKNVPVAR.

This sequence belongs to the class-II aminoacyl-tRNA synthetase family. Tetramer of two alpha and two beta subunits.

It is found in the cytoplasm. It catalyses the reaction tRNA(Gly) + glycine + ATP = glycyl-tRNA(Gly) + AMP + diphosphate. This chain is Glycine--tRNA ligase alpha subunit, found in Nostoc sp. (strain PCC 7120 / SAG 25.82 / UTEX 2576).